Here is a 428-residue protein sequence, read N- to C-terminus: CRS2-associated factor 1, mitochondrial (428 aa).

A mitochondrion-targeting transit peptide spans 1 to 21 (MLLLAGLLRRARPPRRPSVRR). Disordered regions lie at residues 33 to 100 (PPAS…REPK) and 129 to 152 (HADD…RERV). 2 CRM domains span residues 155–253 (EPLT…KRPV) and 275–371 (EGLT…IQDN). A disordered region spans residues 378–428 (SVLEEESAGAESENGDQEQASSDWASDECSQLSSSDEMPDDKSAISEADSD). Positions 380–393 (LEEESAGAESENGD) are enriched in acidic residues. Positions 394 to 413 (QEQASSDWASDECSQLSSSD) are enriched in polar residues.

In terms of assembly, part of large ribonucleo-protein complexes that include group IIB introns.

The protein localises to the mitochondrion. In terms of biological role, may be involved in the splicing of group IIB introns in mitochondria. The polypeptide is CRS2-associated factor 1, mitochondrial (Oryza sativa subsp. japonica (Rice)).